Reading from the N-terminus, the 580-residue chain is E3 ubiquitin-protein ligase TRIM45 (580 aa).

The RING-type zinc-finger motif lies at 29-98 (CPLCMGLFKA…QIGILCPVCD (70 aa)). 2 consecutive B box-type zinc fingers follow at residues 130 to 176 (GQGL…MVDL) and 186 to 227 (GKPI…CDFT). 8 residues coordinate Zn(2+): C135, C138, C158, H162, C191, H194, C214, and H219. Residues 281–335 (SEGYIKAIEEHRDKLLKQLEDIRVQKENSLQLQKAQLEQLLADMRTGVEFTEHLL) adopt a coiled-coil conformation. One copy of the Filamin repeat lies at 394–497 (TKEVDPAKCV…VQGSPFTVTV (104 aa)).

Belongs to the TRIM/RBCC family.

Its subcellular location is the cytoplasm. The protein localises to the nucleus. The enzyme catalyses S-ubiquitinyl-[E2 ubiquitin-conjugating enzyme]-L-cysteine + [acceptor protein]-L-lysine = [E2 ubiquitin-conjugating enzyme]-L-cysteine + N(6)-ubiquitinyl-[acceptor protein]-L-lysine.. Its function is as follows. E3 ubiquitin-protein ligase that plays a role in the regulation of inflammatory response. Mechanistically, mediates the 'Lys-48'-linked polyubiquitination of TAB2, a regulatory protein of the kinase TAK1, leading to its degradation via the proteasomal pathway and inhibition of the TLR-mediated inflammatory immune response. May act as a transcriptional repressor in mitogen-activated protein kinase signaling pathway. This chain is E3 ubiquitin-protein ligase TRIM45 (TRIM45), found in Bos taurus (Bovine).